Consider the following 234-residue polypeptide: Ribonuclease HII (234 aa).

The 192-residue stretch at 30 to 221 folds into the RNase H type-2 domain; the sequence is GPVAGVDEAG…VRNAAMGSSL (192 aa). A divalent metal cation contacts are provided by aspartate 36, glutamate 37, and aspartate 130.

This sequence belongs to the RNase HII family. Mn(2+) is required as a cofactor. Mg(2+) serves as cofactor.

It is found in the cytoplasm. It catalyses the reaction Endonucleolytic cleavage to 5'-phosphomonoester.. Functionally, endonuclease that specifically degrades the RNA of RNA-DNA hybrids. This Mycobacteroides abscessus (strain ATCC 19977 / DSM 44196 / CCUG 20993 / CIP 104536 / JCM 13569 / NCTC 13031 / TMC 1543 / L948) (Mycobacterium abscessus) protein is Ribonuclease HII.